The primary structure comprises 274 residues: NADPH-dependent 7-cyano-7-deazaguanine reductase (274 aa).

Residue 80–82 (VES) coordinates substrate. 82–83 (SK) serves as a coordination point for NADPH. Residue C181 is the Thioimide intermediate of the active site. The active-site Proton donor is the D188. Substrate is bound at residue 220–221 (HE). 249–250 (RG) is a binding site for NADPH.

It belongs to the GTP cyclohydrolase I family. QueF type 2 subfamily. As to quaternary structure, homodimer.

It localises to the cytoplasm. It carries out the reaction 7-aminomethyl-7-carbaguanine + 2 NADP(+) = 7-cyano-7-deazaguanine + 2 NADPH + 3 H(+). The protein operates within tRNA modification; tRNA-queuosine biosynthesis. Its function is as follows. Catalyzes the NADPH-dependent reduction of 7-cyano-7-deazaguanine (preQ0) to 7-aminomethyl-7-deazaguanine (preQ1). The polypeptide is NADPH-dependent 7-cyano-7-deazaguanine reductase (Paraburkholderia phymatum (strain DSM 17167 / CIP 108236 / LMG 21445 / STM815) (Burkholderia phymatum)).